The sequence spans 327 residues: uncharacterized protein (327 aa).

Residues 13–33 (IICIISIIVLLLIIISLYPHK) form a helical membrane-spanning segment.

The protein resides in the membrane. This is an uncharacterized protein from Caenorhabditis elegans.